Here is a 708-residue protein sequence, read N- to C-terminus: Exocyst complex component 8 (708 aa).

In terms of domain architecture, PH spans 168-268 (YLVYNGDLLE…WLEVLEETKR (101 aa)). A compositionally biased stretch (basic and acidic residues) spans 271–282 (ALSEKRRLEQEA). The tract at residues 271–314 (ALSEKRRLEQEALPRPAPTPPESTNPFEEEEEEEEEPSAEEEAV) is disordered. Residues 297 to 314 (FEEEEEEEEEPSAEEEAV) show a composition bias toward acidic residues.

It belongs to the EXO84 family. In terms of assembly, the exocyst complex is composed of EXOC1, EXOC2, EXOC3, EXOC4, EXOC5, EXOC6, EXOC7 and EXOC8.

It localises to the cytoplasm. It is found in the perinuclear region. The protein resides in the cell projection. Its subcellular location is the growth cone. Component of the exocyst complex involved in the docking of exocytic vesicles with fusion sites on the plasma membrane. The chain is Exocyst complex component 8 (EXOC8) from Gallus gallus (Chicken).